We begin with the raw amino-acid sequence, 300 residues long: 4-hydroxy-tetrahydrodipicolinate synthase (300 aa).

T46 serves as a coordination point for pyruvate. Y134 acts as the Proton donor/acceptor in catalysis. Residue K162 is the Schiff-base intermediate with substrate of the active site. Residue I207 coordinates pyruvate.

Belongs to the DapA family. In terms of assembly, homotetramer; dimer of dimers.

The protein resides in the cytoplasm. It carries out the reaction L-aspartate 4-semialdehyde + pyruvate = (2S,4S)-4-hydroxy-2,3,4,5-tetrahydrodipicolinate + H2O + H(+). The protein operates within amino-acid biosynthesis; L-lysine biosynthesis via DAP pathway; (S)-tetrahydrodipicolinate from L-aspartate: step 3/4. Catalyzes the condensation of (S)-aspartate-beta-semialdehyde [(S)-ASA] and pyruvate to 4-hydroxy-tetrahydrodipicolinate (HTPA). This Protochlamydia amoebophila (strain UWE25) protein is 4-hydroxy-tetrahydrodipicolinate synthase.